Here is a 313-residue protein sequence, read N- to C-terminus: Ribosomal RNA small subunit methyltransferase H (313 aa).

S-adenosyl-L-methionine contacts are provided by residues 35–37, D55, F79, D101, and Q108; that span reads GGH.

This sequence belongs to the methyltransferase superfamily. RsmH family.

It is found in the cytoplasm. It catalyses the reaction cytidine(1402) in 16S rRNA + S-adenosyl-L-methionine = N(4)-methylcytidine(1402) in 16S rRNA + S-adenosyl-L-homocysteine + H(+). Specifically methylates the N4 position of cytidine in position 1402 (C1402) of 16S rRNA. The polypeptide is Ribosomal RNA small subunit methyltransferase H (Enterobacter sp. (strain 638)).